The sequence spans 126 residues: Protein HEAT-INDUCED TAS1 TARGET 3 (126 aa).

Belongs to the heat induced plant HTT protein family. Expressed in seedlings, leaves, stems, inflorescences and siliques.

Its subcellular location is the cytoplasm. The protein localises to the nucleus. In terms of biological role, mediates both basal and acquired thermotolerance. This chain is Protein HEAT-INDUCED TAS1 TARGET 3, found in Arabidopsis thaliana (Mouse-ear cress).